The sequence spans 202 residues: LexA repressor (202 aa).

The segment at residues 28 to 48 is a DNA-binding region (H-T-H motif); the sequence is IAEIARAIGVSSPHGVREQLR. Active-site for autocatalytic cleavage activity residues include Ser-120 and Lys-157.

The protein belongs to the peptidase S24 family. Homodimer.

It carries out the reaction Hydrolysis of Ala-|-Gly bond in repressor LexA.. Functionally, represses a number of genes involved in the response to DNA damage (SOS response), including recA and lexA. In the presence of single-stranded DNA, RecA interacts with LexA causing an autocatalytic cleavage which disrupts the DNA-binding part of LexA, leading to derepression of the SOS regulon and eventually DNA repair. The sequence is that of LexA repressor from Methylococcus capsulatus (strain ATCC 33009 / NCIMB 11132 / Bath).